We begin with the raw amino-acid sequence, 513 residues long: Lysine--tRNA ligase (513 aa).

Mg(2+) is bound by residues glutamate 422 and glutamate 429.

This sequence belongs to the class-II aminoacyl-tRNA synthetase family. In terms of assembly, homodimer. The cofactor is Mg(2+).

The protein resides in the cytoplasm. It catalyses the reaction tRNA(Lys) + L-lysine + ATP = L-lysyl-tRNA(Lys) + AMP + diphosphate. The sequence is that of Lysine--tRNA ligase from Tolumonas auensis (strain DSM 9187 / NBRC 110442 / TA 4).